Reading from the N-terminus, the 144-residue chain is Transcriptional regulator SlyA (144 aa).

Residues 2–135 form the HTH marR-type domain; that stretch reads ESTLGSDLAR…LVGLIGKLEQ (134 aa). A DNA-binding region (H-T-H motif) is located at residues 49–72; the sequence is QIQLAKAIGIEQPSLVRTLDQLEE.

This sequence belongs to the SlyA family. As to quaternary structure, homodimer.

Functionally, transcription regulator that can specifically activate or repress expression of target genes. The protein is Transcriptional regulator SlyA of Serratia proteamaculans (strain 568).